The primary structure comprises 405 residues: Glucan 1,3-beta-glucosidase A (405 aa).

Residues 1–14 (MLPLLLCIVPYCWS) form the signal peptide. The Proton donor role is filled by glutamate 199. 2 disulfide bridges follow: cysteine 280/cysteine 405 and cysteine 306/cysteine 332. Glutamate 298 functions as the Nucleophile in the catalytic mechanism.

This sequence belongs to the glycosyl hydrolase 5 (cellulase A) family. Monomer. It depends on Mn(2+) as a cofactor.

It localises to the secreted. It carries out the reaction Successive hydrolysis of beta-D-glucose units from the non-reducing ends of (1-&gt;3)-beta-D-glucans, releasing alpha-glucose.. In terms of biological role, beta-glucanases participate in the metabolism of beta-glucan, the main structural component of the cell wall. It could also function biosynthetically as a transglycosylase. In Aspergillus oryzae (strain ATCC 42149 / RIB 40) (Yellow koji mold), this protein is Glucan 1,3-beta-glucosidase A (exgA).